A 449-amino-acid polypeptide reads, in one-letter code: Nucleoporin NUP42 (449 aa).

The segment at methionine 1–glycine 25 adopts a C3H1-type zinc-finger fold. 2 disordered regions span residues histidine 22–asparagine 84 and aspartate 218–proline 237. 2 stretches are compositionally biased toward polar residues: residues tryptophan 47–aspartate 83 and aspartate 218–glutamine 227. 7 FG repeats span residues phenylalanine 231–glycine 232, phenylalanine 274–glycine 275, phenylalanine 284–glycine 285, phenylalanine 305–glycine 306, phenylalanine 314–glycine 315, phenylalanine 335–glycine 336, and phenylalanine 347–glycine 348.

As to quaternary structure, probable component of the nuclear pore complex (NPC).

The protein localises to the nucleus. It localises to the nuclear pore complex. Its subcellular location is the nucleus membrane. Its function is as follows. Required for the export of mRNAs containing poly(A) tails from the nucleus into the cytoplasm. The protein is Nucleoporin NUP42 (nup42) of Xenopus tropicalis (Western clawed frog).